The following is a 236-amino-acid chain: 2-C-methyl-D-erythritol 4-phosphate cytidylyltransferase (236 aa).

The protein belongs to the IspD/TarI cytidylyltransferase family. IspD subfamily. In terms of assembly, homodimer.

The enzyme catalyses 2-C-methyl-D-erythritol 4-phosphate + CTP + H(+) = 4-CDP-2-C-methyl-D-erythritol + diphosphate. The protein operates within isoprenoid biosynthesis; isopentenyl diphosphate biosynthesis via DXP pathway; isopentenyl diphosphate from 1-deoxy-D-xylulose 5-phosphate: step 2/6. Catalyzes the formation of 4-diphosphocytidyl-2-C-methyl-D-erythritol from CTP and 2-C-methyl-D-erythritol 4-phosphate (MEP). This chain is 2-C-methyl-D-erythritol 4-phosphate cytidylyltransferase, found in Buchnera aphidicola subsp. Schizaphis graminum (strain Sg).